A 91-amino-acid polypeptide reads, in one-letter code: DNA-directed RNA polymerase subunit omega (91 aa).

The protein belongs to the RNA polymerase subunit omega family. As to quaternary structure, the RNAP catalytic core consists of 2 alpha, 1 beta, 1 beta' and 1 omega subunit. When a sigma factor is associated with the core the holoenzyme is formed, which can initiate transcription.

It catalyses the reaction RNA(n) + a ribonucleoside 5'-triphosphate = RNA(n+1) + diphosphate. Its function is as follows. Promotes RNA polymerase assembly. Latches the N- and C-terminal regions of the beta' subunit thereby facilitating its interaction with the beta and alpha subunits. This Shigella flexneri protein is DNA-directed RNA polymerase subunit omega.